The following is a 218-amino-acid chain: Cytochrome c biogenesis ATP-binding export protein CcmA (218 aa).

Residues 2 to 217 form the ABC transporter domain; that stretch reads LEAKNLTCIR…KSCLSACCAV (216 aa). ATP is bound at residue 34 to 41; it reads GPNGAGKT.

It belongs to the ABC transporter superfamily. CcmA exporter (TC 3.A.1.107) family. As to quaternary structure, the complex is composed of two ATP-binding proteins (CcmA) and two transmembrane proteins (CcmB).

The protein resides in the cell inner membrane. It catalyses the reaction heme b(in) + ATP + H2O = heme b(out) + ADP + phosphate + H(+). Functionally, part of the ABC transporter complex CcmAB involved in the biogenesis of c-type cytochromes; once thought to export heme, this seems not to be the case, but its exact role is uncertain. Responsible for energy coupling to the transport system. The protein is Cytochrome c biogenesis ATP-binding export protein CcmA of Yersinia pestis.